A 185-amino-acid polypeptide reads, in one-letter code: Elongation factor P 1 (185 aa).

The protein belongs to the elongation factor P family.

Its subcellular location is the cytoplasm. It functions in the pathway protein biosynthesis; polypeptide chain elongation. Involved in peptide bond synthesis. Stimulates efficient translation and peptide-bond synthesis on native or reconstituted 70S ribosomes in vitro. Probably functions indirectly by altering the affinity of the ribosome for aminoacyl-tRNA, thus increasing their reactivity as acceptors for peptidyl transferase. The chain is Elongation factor P 1 (efp1) from Chlamydia pneumoniae (Chlamydophila pneumoniae).